The following is a 197-amino-acid chain: MAVSPKINRREHILQCLAQMLETSPGQRITTAKLASEVGVSEAALYRHFPSKARMFEGLIEFIEESLLSRINIIMDDEKDTMKRCQLVLQLLLIFAERNPGISRVLNGDALLGENERLRSRISTLFAKIETQLKQILREKTLREGKGFNLDEAILANLLLAFAEGRIAQFVRSEFKLKPTQHFDEQWRFIQHQLLQS.

An HTH tetR-type domain is found at 7–67 (INRREHILQC…GLIEFIEESL (61 aa)). Residues 30–49 (TTAKLASEVGVSEAALYRHF) constitute a DNA-binding region (H-T-H motif).

Belongs to the nucleoid occlusion factor SlmA family. In terms of assembly, homodimer. Interacts with FtsZ.

It localises to the cytoplasm. The protein resides in the nucleoid. Required for nucleoid occlusion (NO) phenomenon, which prevents Z-ring formation and cell division over the nucleoid. Acts as a DNA-associated cell division inhibitor that binds simultaneously chromosomal DNA and FtsZ, and disrupts the assembly of FtsZ polymers. SlmA-DNA-binding sequences (SBS) are dispersed on non-Ter regions of the chromosome, preventing FtsZ polymerization at these regions. This is Nucleoid occlusion factor SlmA from Shewanella oneidensis (strain ATCC 700550 / JCM 31522 / CIP 106686 / LMG 19005 / NCIMB 14063 / MR-1).